A 1050-amino-acid chain; its full sequence is MDS1 and EVI1 complex locus protein EVI1-B (1050 aa).

C2H2-type zinc fingers lie at residues 21-48 (YHCE…GTPH), 75-97 (HECK…LLSH), and 103-125 (YKCD…QMSH). The C2H2-type 4; degenerate zinc-finger motif lies at 131-155 (YECENCSKQVFTDPSNLQRHIRSQH). C2H2-type zinc fingers lie at residues 161 to 183 (HACS…KHIH) and 189 to 211 (FVCE…KRMH). The segment at 218-240 (IKCKDCGQMFSTTSSLNKHRRFC) adopts a C2H2-type 7; atypical zinc-finger fold. Disordered regions lie at residues 371 to 421 (ITEN…SDKD) and 529 to 612 (PLKV…EKKD). Basic and acidic residues predominate over residues 379–390 (RPHEKVSDHSES). A compositionally biased stretch (polar residues) spans 397–411 (STPSGSDLETTSGSD). Positions 420 to 433 (KDKLKENGKLYKDK) match the Nuclear localization signal motif. Positions 529–542 (PLKVEPESPKESKK) are enriched in basic and acidic residues. Positions 551 to 555 (AFDLT) match the CTBP-binding motif 1 motif. A compositionally biased stretch (low complexity) spans 564-576 (SPNAPSKSSAPTS). Residues 582–586 (PLDLS) carry the CTBP-binding motif 2 motif. Residues 588–598 (GSRSRATTTKQ) are compositionally biased toward polar residues. Positions 599–612 (TESRKNHIFGEKKD) are enriched in basic and acidic residues. C2H2-type zinc fingers lie at residues 731 to 753 (YTCR…LRTH), 759 to 782 (YRCK…RNIH), and 788 to 810 (FKCH…LKKH). Residues 928–951 (KSEVNCKVSPSRHDDDDDDEEEDF) form a disordered region.

In terms of assembly, homooligomer. Interacts with ctbp.

It localises to the nucleus. The protein localises to the nucleus speckle. In terms of biological role, transcriptional repressor during pronephros development. Plays a role in regionalization of the pronephros; may promote formation of the distal tubule and duct over formation of the glomus and proximal tubule. This Xenopus laevis (African clawed frog) protein is MDS1 and EVI1 complex locus protein EVI1-B (mecom-b).